The chain runs to 98 residues: NADH-ubiquinone oxidoreductase chain 4L (98 aa).

Transmembrane regions (helical) follow at residues 1–21 (MPSI…GMLV), 29–49 (SLLC…LTAL), and 61–81 (IILL…LVMV).

The protein belongs to the complex I subunit 4L family. In terms of assembly, core subunit of respiratory chain NADH dehydrogenase (Complex I) which is composed of 45 different subunits.

It is found in the mitochondrion inner membrane. The catalysed reaction is a ubiquinone + NADH + 5 H(+)(in) = a ubiquinol + NAD(+) + 4 H(+)(out). Its function is as follows. Core subunit of the mitochondrial membrane respiratory chain NADH dehydrogenase (Complex I) which catalyzes electron transfer from NADH through the respiratory chain, using ubiquinone as an electron acceptor. Part of the enzyme membrane arm which is embedded in the lipid bilayer and involved in proton translocation. This chain is NADH-ubiquinone oxidoreductase chain 4L (MT-ND4L), found in Oryctolagus cuniculus (Rabbit).